The following is a 292-amino-acid chain: Golgi to ER traffic protein 2 (292 aa).

The span at 1–18 shows a compositional bias: basic and acidic residues; it reads MSELSAEEKRKLLRERRQ. Positions 1–80 are disordered; that stretch reads MSELSAEEKR…TPLHDDPEVP (80 aa). The Cytoplasmic segment spans residues 1–158; sequence MSELSAEEKR…SQYHAYEQKQ (158 aa). 2 stretches are compositionally biased toward polar residues: residues 29–47 and 55–71; these read RLNN…NVTS and ATTT…QSPT. A helical membrane pass occupies residues 159–179; the sequence is WKARFLVVRWIIHTLNFVYHY. Residues 180–205 are Lumenal-facing; sequence IASGYKLSASPYAFVRAQAVDSHVRT. The chain crosses the membrane as a helical span at residues 206 to 225; it reads FFTAFLTVEVAVISAYFLVM. Residues 226-268 are Cytoplasmic-facing; sequence SQPKFKDFSRENLVSRILSMASAVVPAVGRYQPLVTRALVYWN. A helical membrane pass occupies residues 269–289; that stretch reads GASIFVGDLMLMVFYFGITSV. The Lumenal segment spans residues 290-292; it reads LGN.

Belongs to the GET2 family. In terms of assembly, component of the Golgi to ER traffic (GET) complex, which is composed of GET1, GET2 and GET3. Within the complex, GET1 and GET2 form a heterotetramer which is stabilized by phosphatidylinositol binding and which binds to the GET3 homodimer.

The protein localises to the endoplasmic reticulum membrane. Its subcellular location is the golgi apparatus membrane. Functionally, required for the post-translational delivery of tail-anchored (TA) proteins to the endoplasmic reticulum. Together with GET1, acts as a membrane receptor for soluble GET3, which recognizes and selectively binds the transmembrane domain of TA proteins in the cytosol. The GET complex cooperates with the HDEL receptor ERD2 to mediate the ATP-dependent retrieval of resident ER proteins that contain a C-terminal H-D-E-L retention signal from the Golgi to the ER. This Clavispora lusitaniae (strain ATCC 42720) (Yeast) protein is Golgi to ER traffic protein 2.